Reading from the N-terminus, the 274-residue chain is Nitrogenase iron protein (274 aa).

8 to 15 (GKGGIGKS) contacts ATP. [4Fe-4S] cluster is bound at residue Cys-94. Arg-97 carries the ADP-ribosylarginine; by dinitrogenase reductase ADP-ribosyltransferase modification. [4Fe-4S] cluster is bound at residue Cys-131.

This sequence belongs to the NifH/BchL/ChlL family. Homodimer. Requires [4Fe-4S] cluster as cofactor. In terms of processing, the reversible ADP-ribosylation of Arg-97 inactivates the nitrogenase reductase and regulates nitrogenase activity.

The catalysed reaction is N2 + 8 reduced [2Fe-2S]-[ferredoxin] + 16 ATP + 16 H2O = H2 + 8 oxidized [2Fe-2S]-[ferredoxin] + 2 NH4(+) + 16 ADP + 16 phosphate + 6 H(+). Functionally, the key enzymatic reactions in nitrogen fixation are catalyzed by the nitrogenase complex, which has 2 components: the iron protein and the molybdenum-iron protein. The protein is Nitrogenase iron protein of Dehalococcoides mccartyi (strain ATCC BAA-2266 / KCTC 15142 / 195) (Dehalococcoides ethenogenes (strain 195)).